A 1019-amino-acid chain; its full sequence is Photoactivated adenylate cyclase subunit alpha-like protein 1224-5/1F (1019 aa).

Residues 55-148 (LRRLMYLSAS…GRMYGWWHLK (94 aa)) form the BLUF 1 domain. In terms of domain architecture, Guanylate cyclase 1 spans 204–332 (VVTVIYLVEF…DWINSASRIT (129 aa)). The 93-residue stretch at 467 to 559 (LITLTYISQA…GVYGSPLDMT (93 aa)) folds into the BLUF 2 domain. Positions 615–744 (VMLATAISSF…EVRARVLEVE (130 aa)) constitute a Guanylate cyclase 2 domain. Residues 825–863 (NISCRGGNPPAGGIPTSPKVRPPGRTNSVSSYTPDPKQA) form a disordered region.

Belongs to the adenylyl cyclase class-4/guanylyl cyclase family. In terms of assembly, heterotetramer of two alpha and two beta subunits.

It localises to the cell projection. Its subcellular location is the cilium. The protein localises to the flagellum. The chain is Photoactivated adenylate cyclase subunit alpha-like protein 1224-5/1F from Euglena gracilis.